The primary structure comprises 159 residues: uncharacterized protein (159 aa).

It to M.jannaschii MJECL20.

This is an uncharacterized protein from Methanocaldococcus jannaschii (strain ATCC 43067 / DSM 2661 / JAL-1 / JCM 10045 / NBRC 100440) (Methanococcus jannaschii).